The sequence spans 109 residues: Nucleoid-associated protein PM0205 (109 aa).

The protein belongs to the YbaB/EbfC family. As to quaternary structure, homodimer.

It is found in the cytoplasm. Its subcellular location is the nucleoid. Its function is as follows. Binds to DNA and alters its conformation. May be involved in regulation of gene expression, nucleoid organization and DNA protection. This Pasteurella multocida (strain Pm70) protein is Nucleoid-associated protein PM0205.